The following is a 224-amino-acid chain: Endonuclease NucS (224 aa).

It belongs to the NucS endonuclease family.

It localises to the cytoplasm. Its function is as follows. Cleaves both 3' and 5' ssDNA extremities of branched DNA structures. This Mycolicibacterium smegmatis (strain ATCC 700084 / mc(2)155) (Mycobacterium smegmatis) protein is Endonuclease NucS.